A 328-amino-acid polypeptide reads, in one-letter code: YDG domain-containing protein At5g47150 (328 aa).

The region spanning 176-320 (GSVPGINIGD…KSVYKFKLCR (145 aa)) is the YDG domain.

It localises to the nucleus. This chain is YDG domain-containing protein At5g47150, found in Arabidopsis thaliana (Mouse-ear cress).